Consider the following 256-residue polypeptide: Type III pantothenate kinase (256 aa).

Position 6–13 (6–13 (DVGNSNIV)) interacts with ATP. Residues Y100 and 107 to 110 (GADR) contribute to the substrate site. D109 acts as the Proton acceptor in catalysis. Residue D129 coordinates K(+). T132 is an ATP binding site. T184 lines the substrate pocket.

Belongs to the type III pantothenate kinase family. In terms of assembly, homodimer. The cofactor is NH4(+). K(+) serves as cofactor.

Its subcellular location is the cytoplasm. The catalysed reaction is (R)-pantothenate + ATP = (R)-4'-phosphopantothenate + ADP + H(+). It participates in cofactor biosynthesis; coenzyme A biosynthesis; CoA from (R)-pantothenate: step 1/5. Catalyzes the phosphorylation of pantothenate (Pan), the first step in CoA biosynthesis. The protein is Type III pantothenate kinase of Geotalea daltonii (strain DSM 22248 / JCM 15807 / FRC-32) (Geobacter daltonii).